Here is a 511-residue protein sequence, read N- to C-terminus: Putative thymidine phosphorylase (511 aa).

Belongs to the thymidine/pyrimidine-nucleoside phosphorylase family. Type 2 subfamily.

It carries out the reaction thymidine + phosphate = 2-deoxy-alpha-D-ribose 1-phosphate + thymine. The polypeptide is Putative thymidine phosphorylase (Bradyrhizobium sp. (strain BTAi1 / ATCC BAA-1182)).